The chain runs to 52 residues: ERMES regulator 1 (52 aa).

Over 1–27 the chain is Mitochondrial intermembrane; sequence MIFFFNQIRSIFTALHTPTQQIQLSRR. A helical membrane pass occupies residues 28–46; the sequence is AFFQFLGYLGSCVVISLAA. Residues 47–52 lie on the Cytoplasmic side of the membrane; that stretch reads QSKYVQ.

It belongs to the EMR1 family.

The protein localises to the mitochondrion outer membrane. Functionally, mediates the formation of endoplasmic reticulum (ER)-mitochondria encounter structure (ERMES) foci, thereby contributing to the formation of ER-mitochondrial contact sites. This chain is ERMES regulator 1, found in Saccharomyces cerevisiae (strain ATCC 204508 / S288c) (Baker's yeast).